A 257-amino-acid polypeptide reads, in one-letter code: VLIRVLANLLVLQLSYAQKSSELVIGGAECNINEHRSLALVYNSSGLLCCGILINQEWVLSAAHCDMENMQIYLGLHNISRPNQDQKRRVPKQKFFCLSNKTYTRWDKDIMLIKLNSPVPYSTHIAPLSLPSSPPIVGSVCRIMGWGATKSPNENVPHVPHCANINILHYSVCRATYGRLPAKSRTLCAGIPRRRIGSCLGDSGGPLICNGQVEGIVSWASKPCVHNGAPGMYTKVYDYTDWIRSIIGGNTSATCPL.

The first 17 residues, 1-17, serve as a signal peptide directing secretion; sequence VLIRVLANLLVLQLSYA. A propeptide spanning residues 18–23 is cleaved from the precursor; that stretch reads QKSSEL. One can recognise a Peptidase S1 domain in the interval 24–248; that stretch reads VIGGAECNIN…YTDWIRSIIG (225 aa). Cystine bridges form between Cys-30–Cys-162, Cys-49–Cys-65, Cys-97–Cys-255, Cys-141–Cys-209, Cys-173–Cys-188, and Cys-199–Cys-224. The N-linked (GlcNAc...) asparagine glycan is linked to Asn-43. His-64 (charge relay system) is an active-site residue. N-linked (GlcNAc...) asparagine glycosylation is found at Asn-78 and Asn-100. Catalysis depends on Asp-109, which acts as the Charge relay system. Ser-203 serves as the catalytic Charge relay system. Asn-250 carries an N-linked (GlcNAc...) asparagine glycan.

The protein belongs to the peptidase S1 family. Snake venom subfamily. Expressed by the venom gland.

It localises to the secreted. Snake venom serine protease that may act in the hemostasis system of the prey. The polypeptide is Snake venom serine protease rhinocerase 4 (Bitis rhinoceros (West African gaboon viper)).